The primary structure comprises 375 residues: Kininogen (375 aa).

The first 23 residues, 1–23, serve as a signal peptide directing secretion; the sequence is MKLGVRLCVLVVFSLQLWGPGQG. 2 consecutive Cystatin kininogen-type domains span residues 35-139 and 156-260; these read CDDK…VEAP and VESE…GPLD. Residue Asn-74 is glycosylated (N-linked (GlcNAc) asparagine). Intrachain disulfides connect Cys-91–Cys-102, Cys-115–Cys-133, Cys-211–Cys-223, and Cys-234–Cys-254. N-linked (GlcNAc) asparagine glycosylation is present at Asn-235. The tract at residues 283 to 375 is disordered; sequence EVKTTQASTA…LSDLDLLGKK (93 aa).

In terms of processing, N-glycosylated, with sialylated biantennary complex-type glycans. O-glycosylated, sialylated oligosaccharides. Post-translationally, bradykinin is released from kininogen by kallikrein. In terms of processing, the N-terminus is blocked. Expressed in the skin, liver, intestine, spleen, pancreas and kidney.

It localises to the cytoplasm. It is found in the vacuole. In terms of biological role, inhibits papain and ficin (cysteine proteinases) but not trypsin (a serine proteinase). This Salmo salar (Atlantic salmon) protein is Kininogen (LOC106584303).